We begin with the raw amino-acid sequence, 81 residues long: ATP synthase subunit c (81 aa).

Helical transmembrane passes span 5 to 25 (VAAASVIAAALAVGLAAIGPG) and 57 to 77 (LAFMESLTIYGLVIALVLLFA).

This sequence belongs to the ATPase C chain family. F-type ATPases have 2 components, F(1) - the catalytic core - and F(0) - the membrane proton channel. F(1) has five subunits: alpha(3), beta(3), gamma(1), delta(1), epsilon(1). F(0) has four main subunits: a(1), b(1), b'(1) and c(10-14). The alpha and beta chains form an alternating ring which encloses part of the gamma chain. F(1) is attached to F(0) by a central stalk formed by the gamma and epsilon chains, while a peripheral stalk is formed by the delta, b and b' chains.

It localises to the cellular thylakoid membrane. Functionally, f(1)F(0) ATP synthase produces ATP from ADP in the presence of a proton or sodium gradient. F-type ATPases consist of two structural domains, F(1) containing the extramembraneous catalytic core and F(0) containing the membrane proton channel, linked together by a central stalk and a peripheral stalk. During catalysis, ATP synthesis in the catalytic domain of F(1) is coupled via a rotary mechanism of the central stalk subunits to proton translocation. Its function is as follows. Key component of the F(0) channel; it plays a direct role in translocation across the membrane. A homomeric c-ring of between 10-14 subunits forms the central stalk rotor element with the F(1) delta and epsilon subunits. In Microcystis aeruginosa (strain NIES-843 / IAM M-2473), this protein is ATP synthase subunit c.